We begin with the raw amino-acid sequence, 248 residues long: MNKELLLGVNIDHIATIRQARGTRYPDPVQAAMDAEEAGADGITLHMREDLRHIQARDVRLIKQVLQTRMNLELAVTEAMLDFAEEISPEHSCLVPEKREELTTEGGLDILTHRNVVEKAVRRLQLMGSEVSLFIDPDKEQIRAAVDVGAPVIELHTGCYADATSEEKQHYELQRIKEAAEFAASLNLVVNAGHGLHYHNVKPIAAIRELNELNIGHAIIARALFCGLKEAVRHMRQLMQEARLYVND.

Asn10 is a binding site for 3-amino-2-oxopropyl phosphate. Position 12–13 (12–13 (DH)) interacts with 1-deoxy-D-xylulose 5-phosphate. 3-amino-2-oxopropyl phosphate is bound at residue Arg21. Residue His46 is the Proton acceptor of the active site. Arg48 and His53 together coordinate 1-deoxy-D-xylulose 5-phosphate. Glu73 functions as the Proton acceptor in the catalytic mechanism. Thr103 is a 1-deoxy-D-xylulose 5-phosphate binding site. The active-site Proton donor is His194. 3-amino-2-oxopropyl phosphate-binding positions include Gly195 and 216 to 217 (GH).

It belongs to the PNP synthase family. As to quaternary structure, homooctamer; tetramer of dimers.

The protein localises to the cytoplasm. The catalysed reaction is 3-amino-2-oxopropyl phosphate + 1-deoxy-D-xylulose 5-phosphate = pyridoxine 5'-phosphate + phosphate + 2 H2O + H(+). It functions in the pathway cofactor biosynthesis; pyridoxine 5'-phosphate biosynthesis; pyridoxine 5'-phosphate from D-erythrose 4-phosphate: step 5/5. Functionally, catalyzes the complicated ring closure reaction between the two acyclic compounds 1-deoxy-D-xylulose-5-phosphate (DXP) and 3-amino-2-oxopropyl phosphate (1-amino-acetone-3-phosphate or AAP) to form pyridoxine 5'-phosphate (PNP) and inorganic phosphate. The chain is Pyridoxine 5'-phosphate synthase from Legionella pneumophila (strain Lens).